The following is a 501-amino-acid chain: Lysine--tRNA ligase (501 aa).

Mg(2+) is bound by residues Glu-411 and Glu-418.

The protein belongs to the class-II aminoacyl-tRNA synthetase family. In terms of assembly, homodimer. Mg(2+) is required as a cofactor.

The protein localises to the cytoplasm. The catalysed reaction is tRNA(Lys) + L-lysine + ATP = L-lysyl-tRNA(Lys) + AMP + diphosphate. The sequence is that of Lysine--tRNA ligase from Pseudomonas aeruginosa (strain UCBPP-PA14).